A 723-amino-acid chain; its full sequence is Tripartite motif-containing protein 42 (723 aa).

Residues 146-192 (CPMCNRLRLHSFMLPCNHSLCEKCLRQLQKHAEVTENFFILICPMCS) form an RING-type zinc finger. 2 consecutive B box-type zinc fingers follow at residues 235-280 (PILC…FVDT) and 285-326 (QDEK…TVSL). 4 residues coordinate Zn(2+): cysteine 290, histidine 293, cysteine 313, and histidine 318. Positions 382-412 (KLRAILQEKEKIIMEQIENLEVSRQKEIEKY) form a coiled coil. Residues 434–492 (LKETGQVAFLQSAKILVDQIEEGIQNTFRPDPQLRLHSLHCIPLDFAELSNAIHELFPT) form the COS domain. In terms of domain architecture, Fibronectin type-III spans 603–701 (TPGPIVIYQT…DICKVVTPDG (99 aa)).

This sequence belongs to the TRIM/RBCC family.

In Mus musculus (Mouse), this protein is Tripartite motif-containing protein 42 (Trim42).